A 593-amino-acid chain; its full sequence is Trehalose synthase/amylase TreS (593 aa).

D90 is a binding site for substrate. Position 132 (N132) interacts with Ca(2+). Substrate-binding residues include H133 and Q198. D200 serves as a coordination point for Ca(2+). R228 serves as a coordination point for substrate. D230 serves as the catalytic Nucleophile. Residues Y234, L235, and E237 each coordinate Ca(2+). E272 acts as the Proton donor in catalysis. Substrate contacts are provided by H341 and D342.

Belongs to the glycosyl hydrolase 13 family. TreS subfamily. As to quaternary structure, homohexamer.

The catalysed reaction is D-maltose = alpha,alpha-trehalose. It catalyses the reaction Endohydrolysis of (1-&gt;4)-alpha-D-glucosidic linkages in polysaccharides containing three or more (1-&gt;4)-alpha-linked D-glucose units.. The protein operates within glycan biosynthesis; glycogen biosynthesis. The amylase activity is stimulated by addition of Ca(2+), but this cation and other divalent cations inhibit the trehalose synthase activity. In addition, trehalose synthase activity, but not amylase activity, is strongly inhibited, and in a competitive manner, by validoxylamine. On the other hand, amylase, but not trehalose synthase activity, is inhibited by the known transition-state amylase inhibitor, acarbose, suggesting the possibility of two different active sites. Other metal ions such as Mg(2+), Mn(2+), and Co(2+) are also somewhat effective in the stimulation of amylase activity, but Hg(2+), Cu(2+), Ni(2+) and Zn(2+) are inhibitory. Catalyzes the reversible interconversion of maltose and trehalose by transglucosylation. Maltose is the preferred substrate. To a lesser extent, also displays amylase activity, catalyzing the endohydrolysis of (1-&gt;4)-alpha-D-glucosidic linkages in glycogen and maltooligosaccharides such as maltoheptaose, to produce maltose which then can be converted to trehalose. TreS plays a key role in the utilization of trehalose for the production of glycogen and alpha-glucan via the TreS-Pep2 branch involved in the biosynthesis of maltose-1-phosphate (M1P). Might also function as a sensor and/or regulator of trehalose levels within the cell. Thus, when trehalose levels in the cell become dangerously low, TreS can expedite the conversion of glycogen to maltose via its amylase activity and then convert the maltose to trehalose; but this enzyme also can expedite or promote the conversion of trehalose to glycogen when cytoplasmic trehalose levels become too high. Is also able to catalyze the hydrolytic cleavage of alpha-aryl glucosides, as well as alpha-glucosyl fluoride in vitro. The polypeptide is Trehalose synthase/amylase TreS (Mycolicibacterium smegmatis (strain ATCC 700084 / mc(2)155) (Mycobacterium smegmatis)).